The chain runs to 434 residues: Lipoyl synthase, mitochondrial (434 aa).

A mitochondrion-targeting transit peptide spans 1 to 31 (MAASARGLRTLQSAHSSTTVPRLQLAVSRCY). The segment covering 34 to 54 (TTSPDPPITNSSNSSNSTPTP) has biased composition (low complexity). Residues 34–55 (TTSPDPPITNSSNSSNSTPTPK) are disordered. 7 residues coordinate [4Fe-4S] cluster: Cys-144, Cys-149, Cys-155, Cys-175, Cys-179, Cys-182, and Ser-390. The region spanning 158–379 (GSSKSAATAT…KERALEMGFL (222 aa)) is the Radical SAM core domain.

Belongs to the radical SAM superfamily. Lipoyl synthase family. [4Fe-4S] cluster serves as cofactor.

The protein localises to the mitochondrion. The catalysed reaction is [[Fe-S] cluster scaffold protein carrying a second [4Fe-4S](2+) cluster] + N(6)-octanoyl-L-lysyl-[protein] + 2 oxidized [2Fe-2S]-[ferredoxin] + 2 S-adenosyl-L-methionine + 4 H(+) = [[Fe-S] cluster scaffold protein] + N(6)-[(R)-dihydrolipoyl]-L-lysyl-[protein] + 4 Fe(3+) + 2 hydrogen sulfide + 2 5'-deoxyadenosine + 2 L-methionine + 2 reduced [2Fe-2S]-[ferredoxin]. It functions in the pathway protein modification; protein lipoylation via endogenous pathway; protein N(6)-(lipoyl)lysine from octanoyl-[acyl-carrier-protein]: step 2/2. Functionally, catalyzes the radical-mediated insertion of two sulfur atoms into the C-6 and C-8 positions of the octanoyl moiety bound to the lipoyl domains of lipoate-dependent enzymes, thereby converting the octanoylated domains into lipoylated derivatives. This chain is Lipoyl synthase, mitochondrial, found in Paracoccidioides brasiliensis (strain Pb03).